The sequence spans 303 residues: D-alanine--D-alanine ligase (303 aa).

The region spanning 104 to 300 is the ATP-grasp domain; the sequence is KLLWNAVGLP…FERLVERVLE (197 aa). An ATP-binding site is contributed by 132–187; it reads IAKLGLPLFVKPASEGSSVGVSKVKTAEQLLPAIEEALKYDSIVLVEENLAGAEYS. 3 residues coordinate Mg(2+): Asp-254, Glu-267, and Asn-269.

It belongs to the D-alanine--D-alanine ligase family. Requires Mg(2+) as cofactor. Mn(2+) serves as cofactor.

It localises to the cytoplasm. It carries out the reaction 2 D-alanine + ATP = D-alanyl-D-alanine + ADP + phosphate + H(+). The protein operates within cell wall biogenesis; peptidoglycan biosynthesis. Cell wall formation. The sequence is that of D-alanine--D-alanine ligase from Glaesserella parasuis serovar 5 (strain SH0165) (Haemophilus parasuis).